Reading from the N-terminus, the 128-residue chain is Protein BEX1 (128 aa).

A disordered region spans residues 1–55 (MESKDQGAKNLNMENDHQKKEEKEEKPQDTIKREPVVAPTFEAGKNCAPRGGRRR). The span at 14 to 35 (ENDHQKKEEKEEKPQDTIKREP) shows a compositional bias: basic and acidic residues. Ser-105 carries the post-translational modification Phosphoserine; by PKB/AKT1. The interval 107-128 (SLRAVSTDPPHHDHHDEFCLMP) is disordered. Residues 115–128 (PPHHDHHDEFCLMP) are compositionally biased toward basic and acidic residues. The his cluster stretch occupies residues 117–121 (HHDHH). Residue Cys-125 coordinates Zn(2+).

This sequence belongs to the BEX family. As to quaternary structure, interacts with neurotrophin receptor p75NTR/NGFR. Interacts with OMP. Post-translationally, phosphorylated. Phosphorylation of Ser-105 protects it from the proteasome. In terms of processing, ubiquitinated. Degraded by the proteasome. In terms of tissue distribution, expressed in the central nervous system. Expressed in Schwann cells from newborn sciatic nerve.

The protein localises to the nucleus. It localises to the cytoplasm. Signaling adapter molecule involved in p75NTR/NGFR signaling. Plays a role in cell cycle progression and neuronal differentiation. Inhibits neuronal differentiation in response to nerve growth factor (NGF). May act as a link between the cell cycle and neurotrophic factor signaling, possibly by functioning as an upstream modulator of receptor signaling, coordinating biological responses to external signals with internal cellular states. In absence of reductive stress, acts as a pseudosubstrate for the CRL2(FEM1B) complex: associates with FEM1B via zinc, thereby preventing association between FEM1B and its substrates. The protein is Protein BEX1 (Bex1) of Rattus norvegicus (Rat).